The chain runs to 205 residues: Phosphoribosyl-dephospho-CoA transferase (205 aa).

Residues Asp-134 and Asp-136 contribute to the active site.

It belongs to the MdcG family.

The enzyme catalyses apo-[malonate decarboxylase ACP] + 2'-(5''-triphospho-alpha-D-ribosyl)-3'-dephospho-CoA = holo-[malonate decarboxylase ACP] + diphosphate. Functionally, transfers 2'-(5-triphosphoribosyl)-3'-dephosphocoenzyme-A to the apo-[acyl-carrier-protein] of the malonate decarboxylase to yield holo-[acyl-carrier-protein]. This Klebsiella pneumoniae subsp. pneumoniae (strain ATCC 700721 / MGH 78578) protein is Phosphoribosyl-dephospho-CoA transferase.